Reading from the N-terminus, the 414-residue chain is Isocitrate dehydrogenase [NADP] cytoplasmic (414 aa).

The residue at position 2 (S2) is an N-acetylserine. Y42 bears the Phosphotyrosine mark. 75-77 (TIT) is an NADP(+) binding site. T77 provides a ligand contact to substrate. K81 is subject to N6-acetyllysine. R82 is a binding site for NADP(+). Substrate-binding positions include 94–100 (SPNGTIR) and R109. N6-succinyllysine is present on K126. R132 and K212 together coordinate substrate. N6-acetyllysine occurs at positions 224, 233, and 243. A Mn(2+)-binding site is contributed by D252. NADP(+) is bound at residue K260. Positions 275 and 279 each coordinate Mn(2+). 310 to 315 (GTVTRH) is an NADP(+) binding site. Position 321 is an N6-acetyllysine (K321). N328 is an NADP(+) binding site. Position 389 is a phosphoserine (S389). An N6-succinyllysine modification is found at K400.

Belongs to the isocitrate and isopropylmalate dehydrogenases family. In terms of assembly, homodimer. It depends on Mg(2+) as a cofactor. Mn(2+) serves as cofactor. The N-terminus is blocked. Post-translationally, acetylation at Lys-374 dramatically reduces catalytic activity. In terms of tissue distribution, ubiquitous.

It is found in the cytoplasm. It localises to the cytosol. The protein resides in the peroxisome. It catalyses the reaction D-threo-isocitrate + NADP(+) = 2-oxoglutarate + CO2 + NADPH. In terms of biological role, catalyzes the NADP(+)-dependent oxidative decarboxylation of isocitrate (D-threo-isocitrate) to 2-ketoglutarate (2-oxoglutarate), which is required by other enzymes such as the phytanoyl-CoA dioxygenase. Plays a critical role in the generation of NADPH, an important cofactor in many biosynthesis pathways. May act as a corneal epithelial crystallin and may be involved in maintaining corneal epithelial transparency. The polypeptide is Isocitrate dehydrogenase [NADP] cytoplasmic (Idh1) (Rattus norvegicus (Rat)).